The sequence spans 289 residues: Glycine--tRNA ligase alpha subunit (289 aa).

Belongs to the class-II aminoacyl-tRNA synthetase family. Tetramer of two alpha and two beta subunits.

Its subcellular location is the cytoplasm. The catalysed reaction is tRNA(Gly) + glycine + ATP = glycyl-tRNA(Gly) + AMP + diphosphate. The polypeptide is Glycine--tRNA ligase alpha subunit (Rickettsia bellii (strain OSU 85-389)).